Here is a 715-residue protein sequence, read N- to C-terminus: Probable serine/threonine-protein kinase MARK-B (715 aa).

The span at 24-37 shows a compositional bias: low complexity; that stretch reads SCSSNSTTSSSSNS. The segment at 24–65 is disordered; that stretch reads SCSSNSTTSSSSNSPKQNKVSPGYRNKPQQQQHKKGHKMGNY. One can recognise a Protein kinase domain in the interval 65-320; sequence YLLGKTIGSG…LDEIKTHVWV (256 aa). Residues 71–79 and Lys-94 contribute to the ATP site; that span reads IGSGTSSKV. Residue Asp-187 is the Proton acceptor of the active site. Basic and acidic residues predominate over residues 335-344; the sequence is KVSDRLEKEQ. Disordered stretches follow at residues 335 to 399 and 446 to 530; these read KVSD…IPQN and CSAP…HHST. Low complexity predominate over residues 345-368; that stretch reads QQQTPQHQQTQQQLQPQSQLQQHS. The span at 381–399 shows a compositional bias: polar residues; that stretch reads IGSNRPLNQSSPNLTIPQN. Low complexity-rich tracts occupy residues 451-478 and 487-513; these read SPHSISPQFISPSPSTSTTPPLSPLSVS and SSNPNIGHIPNNNHNSLSSSQNNINTS. Positions 517-527 are enriched in basic residues; it reads QYHHHHHHQNH. In terms of domain architecture, KA1 spans 666–715; the sequence is LCPRNETINFEIEVCKVNGMDMYGIKFKRLSGDAWSYSSSCIKIVESLKL.

It belongs to the protein kinase superfamily. CAMK Ser/Thr protein kinase family. SNF1 subfamily.

The catalysed reaction is L-seryl-[protein] + ATP = O-phospho-L-seryl-[protein] + ADP + H(+). It carries out the reaction L-threonyl-[protein] + ATP = O-phospho-L-threonyl-[protein] + ADP + H(+). This chain is Probable serine/threonine-protein kinase MARK-B (mrkB), found in Dictyostelium discoideum (Social amoeba).